Here is a 504-residue protein sequence, read N- to C-terminus: L-carnitine/gamma-butyrobetaine antiporter (504 aa).

A run of 12 helical transmembrane segments spans residues 10-30 (MEPK…WLTV), 51-71 (WGWA…WLVF), 92-112 (IFMM…SIEI), 143-163 (GPLP…FFFV), 195-215 (FYLV…TPLV), 231-251 (LDAI…ACGL), 263-283 (SYLS…SFIM), 316-336 (WSVF…IFLA), 347-367 (LCFG…TVLG), 398-418 (WAAL…CFIA), 446-466 (LLVR…LLAL), and 475-495 (AIIA…LSFI).

Belongs to the BCCT transporter (TC 2.A.15) family. CaiT subfamily. Homotrimer.

The protein localises to the cell inner membrane. The enzyme catalyses 4-(trimethylamino)butanoate(in) + (R)-carnitine(out) = 4-(trimethylamino)butanoate(out) + (R)-carnitine(in). The protein operates within amine and polyamine metabolism; carnitine metabolism. Functionally, catalyzes the exchange of L-carnitine for gamma-butyrobetaine. This is L-carnitine/gamma-butyrobetaine antiporter from Shigella dysenteriae serotype 1 (strain Sd197).